Consider the following 272-residue polypeptide: Hydroxyethylthiazole kinase (272 aa).

Methionine 45 contacts substrate. Residues arginine 121 and threonine 168 each contribute to the ATP site. Residue glycine 195 participates in substrate binding.

This sequence belongs to the Thz kinase family. Homotrimer. It depends on Mg(2+) as a cofactor.

The catalysed reaction is 5-(2-hydroxyethyl)-4-methylthiazole + ATP = 4-methyl-5-(2-phosphooxyethyl)-thiazole + ADP + H(+). Its pathway is cofactor biosynthesis; thiamine diphosphate biosynthesis; 4-methyl-5-(2-phosphoethyl)-thiazole from 5-(2-hydroxyethyl)-4-methylthiazole: step 1/1. Catalyzes the phosphorylation of the hydroxyl group of 4-methyl-5-beta-hydroxyethylthiazole (THZ). The sequence is that of Hydroxyethylthiazole kinase from Bacillus subtilis (strain 168).